Reading from the N-terminus, the 382-residue chain is Dual-specificity RNA methyltransferase RlmN (382 aa).

The active-site Proton acceptor is the Glu96. In terms of domain architecture, Radical SAM core spans 102–342 (QGGRGTLCVS…VRTTRGEDID (241 aa)). Cys109 and Cys345 are oxidised to a cystine. 3 residues coordinate [4Fe-4S] cluster: Cys116, Cys120, and Cys123. Residues 170–171 (GE), Ser202, 224–226 (SLH), and Asn302 each bind S-adenosyl-L-methionine. Catalysis depends on Cys345, which acts as the S-methylcysteine intermediate.

The protein belongs to the radical SAM superfamily. RlmN family. The cofactor is [4Fe-4S] cluster.

It is found in the cytoplasm. It carries out the reaction adenosine(2503) in 23S rRNA + 2 reduced [2Fe-2S]-[ferredoxin] + 2 S-adenosyl-L-methionine = 2-methyladenosine(2503) in 23S rRNA + 5'-deoxyadenosine + L-methionine + 2 oxidized [2Fe-2S]-[ferredoxin] + S-adenosyl-L-homocysteine. The enzyme catalyses adenosine(37) in tRNA + 2 reduced [2Fe-2S]-[ferredoxin] + 2 S-adenosyl-L-methionine = 2-methyladenosine(37) in tRNA + 5'-deoxyadenosine + L-methionine + 2 oxidized [2Fe-2S]-[ferredoxin] + S-adenosyl-L-homocysteine. Its function is as follows. Specifically methylates position 2 of adenine 2503 in 23S rRNA and position 2 of adenine 37 in tRNAs. m2A2503 modification seems to play a crucial role in the proofreading step occurring at the peptidyl transferase center and thus would serve to optimize ribosomal fidelity. The sequence is that of Dual-specificity RNA methyltransferase RlmN from Stutzerimonas stutzeri (strain A1501) (Pseudomonas stutzeri).